The chain runs to 809 residues: uncharacterized protein (809 aa).

The 188-residue stretch at 19 to 206 (HDLRLVLVAS…FTGMSAITIV (188 aa)) folds into the MHYT domain. 7 consecutive transmembrane segments (helical) span residues 23–43 (LVLVASAVCLAGCFTTFRLYS), 57–77 (LLLTGLVAGSSVWATHFIAMV), 92–112 (TLLSLMIAALFMASGFAVASA), 122–142 (GGVLIGLGVAAMHYMGMSAFV), 152–172 (ATVGMSAVLGVGGATAALLLA), 186–206 (GMLCLGIVMLHFTGMSAITIV), and 224–244 (TLAVGSITSMIILGGLGAVAI). The region spanning 254–317 (ERIRRLANAA…ADPSREDVRR (64 aa)) is the PAS domain. One can recognise a GGDEF domain in the interval 402-536 (ESLAVICIDL…GRGVYRFFKR (135 aa)). The 251-residue stretch at 545–795 (RRNLARDLRQ…ALTMWTTAGD (251 aa)) folds into the EAL domain.

Its subcellular location is the cell membrane. This is an uncharacterized protein from Caulobacter vibrioides (strain ATCC 19089 / CIP 103742 / CB 15) (Caulobacter crescentus).